The following is a 404-amino-acid chain: Endophilin-B2 (404 aa).

M1 is subject to N-acetylmethionine. Residues 1–27 (MDFNMKKLASDAGIFFTRAVQFTEEKF) are membrane-binding amphipathic helix. At S10 the chain carries Phosphoserine. Residues 24 to 291 (EEKFGQAEKT…LGSSQGAIFP (268 aa)) form the BAR domain. Positions 209 to 239 (SASALWNDEVDKAEQELRAAQTEFDRQAEVT) form a coiled coil. Positions 344 to 404 (SGTRKARVLY…VPVTYLELLS (61 aa)) constitute an SH3 domain. Phosphoserine is present on S404.

Belongs to the endophilin family. As to quaternary structure, homodimer, and heterodimer with SH3GLB1.

The protein localises to the cytoplasm. This chain is Endophilin-B2, found in Rattus norvegicus (Rat).